Reading from the N-terminus, the 284-residue chain is Transmembrane protein 163b (284 aa).

Residues 1–44 are disordered; the sequence is MTDSSSASDPTAGPVDPGPAPSAPDPALEDPASTPANGHHPNQA. The Cytoplasmic portion of the chain corresponds to 1–83; sequence MTDSSSASDP…HEAQSYRKKA (83 aa). Residues 84–104 traverse the membrane as a helical segment; sequence LWVSWVSIVVTMILAIAAFTV. Topologically, residues 105–111 are extracellular; that stretch reads SIMRHSA. The chain crosses the membrane as a helical span at residues 112–132; that stretch reads SAFGFAFDATLDVLSSIIVLW. The Cytoplasmic segment spans residues 133 to 145; the sequence is RYSNAAAVHSAHR. The helical transmembrane segment at 146–166 threads the bilayer; the sequence is EYIACVILGVVFILSAITILV. Topologically, residues 167–182 are extracellular; that stretch reads KAIHDLATKLEPEVDD. A helical transmembrane segment spans residues 183–203; it reads FLYSVSVISGVVCTVLCVCKF. Topologically, residues 204–212 are cytoplasmic; sequence MLGKVLTSR. The chain crosses the membrane as a helical span at residues 213–233; that stretch reads ALITDGFNSLVGGVMGFSILI. Residues 234–243 are Extracellular-facing; sequence SAEVFKHEPS. A helical transmembrane segment spans residues 244–264; the sequence is VWFLDGTIGILIGLIILAYGV. Topologically, residues 265–284 are cytoplasmic; it reads KLLKDMVPRIRQTRHYERFE.

It belongs to the TMEM163 family.

It localises to the cytoplasmic vesicle. The protein resides in the secretory vesicle. The protein localises to the synaptic vesicle membrane. It is found in the early endosome membrane. Its subcellular location is the late endosome membrane. It localises to the lysosome membrane. The protein resides in the cell membrane. It catalyses the reaction Zn(2+)(in) = Zn(2+)(out). Zinc ion transporter that mediates zinc efflux and plays a crucial role in intracellular zinc homeostasis. Binds the divalent cations Zn(2+), Ni(2+), and to a minor extent Cu(2+). Is a functional modulator of P2X purinoceptors, including P2RX1, P2RX3, P2RX4 and P2RX7. Plays a role in central nervous system development and is required for myelination, and survival and proliferation of oligodendrocytes. In Danio rerio (Zebrafish), this protein is Transmembrane protein 163b.